A 193-amino-acid chain; its full sequence is Selenoprotein S A (193 aa).

A helical transmembrane segment spans residues 29 to 49; it reads WALASYGWYILFGCIILYFLI. Basic and acidic residues predominate over residues 114–125; it reads IETWDRMQEGKS. Positions 114–193 are disordered; sequence IETWDRMQEG…RRGPSSGGUG (80 aa). Residues 137 to 153 show a composition bias toward low complexity; sequence SPSTSASSSPSTSSSAP. U192 is a non-standard amino acid (selenocysteine).

It belongs to the selenoprotein S family.

The protein localises to the endoplasmic reticulum membrane. Its subcellular location is the cytoplasm. Its function is as follows. Involved in the degradation process of misfolded endoplasmic reticulum (ER) luminal proteins. Participates in the transfer of misfolded proteins from the ER to the cytosol, where they are destroyed by the proteasome in a ubiquitin-dependent manner. The sequence is that of Selenoprotein S A (vimp-a) from Xenopus laevis (African clawed frog).